The sequence spans 1353 residues: DNA-directed RNA polymerase subunit beta' (1353 aa).

Residues 1-117 (MSDNRLFTSV…AFQKLNDLFK (117 aa)) form a unknown region. The tract at residues 118-1353 (LYNHFPSISS…SELAEKTNQN (1236 aa)) is DNA-directed RNA polymerase subunit beta'. The Zn(2+) site is built by cysteine 189, cysteine 191, cysteine 203, and cysteine 206. Positions 578, 580, and 582 each coordinate Mg(2+).

Belongs to the RNA polymerase beta' chain family. The RNAP catalytic core consists of 2 alpha, 1 beta, 1 beta' and 1 omega subunit. When a sigma factor is associated with the core the holoenzyme is formed, which can initiate transcription. The cofactor is Mg(2+). It depends on Zn(2+) as a cofactor.

The catalysed reaction is RNA(n) + a ribonucleoside 5'-triphosphate = RNA(n+1) + diphosphate. In terms of biological role, DNA-dependent RNA polymerase catalyzes the transcription of DNA into RNA using the four ribonucleoside triphosphates as substrates. In Onion yellows phytoplasma (strain OY-M), this protein is DNA-directed RNA polymerase subunit beta'.